A 208-amino-acid chain; its full sequence is Large ribosomal subunit protein uL3 (208 aa).

The disordered stretch occupies residues 134 to 153 (SKFHREAGSTGQCTSPGRTF).

The protein belongs to the universal ribosomal protein uL3 family. Part of the 50S ribosomal subunit. Forms a cluster with proteins L14 and L19.

Functionally, one of the primary rRNA binding proteins, it binds directly near the 3'-end of the 23S rRNA, where it nucleates assembly of the 50S subunit. In Treponema pallidum (strain Nichols), this protein is Large ribosomal subunit protein uL3.